We begin with the raw amino-acid sequence, 140 residues long: ATP synthase epsilon chain (140 aa).

This sequence belongs to the ATPase epsilon chain family. In terms of assembly, F-type ATPases have 2 components, CF(1) - the catalytic core - and CF(0) - the membrane proton channel. CF(1) has five subunits: alpha(3), beta(3), gamma(1), delta(1), epsilon(1). CF(0) has three main subunits: a, b and c.

It localises to the cell inner membrane. In terms of biological role, produces ATP from ADP in the presence of a proton gradient across the membrane. This Saccharophagus degradans (strain 2-40 / ATCC 43961 / DSM 17024) protein is ATP synthase epsilon chain.